The sequence spans 779 residues: Pleckstrin homology domain-containing family A member 4 (779 aa).

One can recognise a PH domain in the interval 54-153; sequence PVHIRGWLHK…WLRALGKASR (100 aa). Disordered regions lie at residues 152 to 355, 495 to 669, and 694 to 766; these read SRAE…LPGP, AGLG…SGGH, and SPER…QEEG. S164 carries the post-translational modification Phosphoserine. The segment covering 183–193 has biased composition (basic and acidic residues); the sequence is VNRREEGRTSE. Low complexity-rich tracts occupy residues 246–259 and 324–334; these read PRPR…PPLS and QSTQVSSGSST. Over residues 517–527 the composition is skewed to basic and acidic residues; that stretch reads QREESSERESL. Positions 528–540 are enriched in low complexity; sequence SESLELSSPQSPE. A Phosphoserine modification is found at S562. The segment covering 567–580 has biased composition (polar residues); the sequence is RASSPECRQQSSPL. Low complexity-rich tracts occupy residues 608 to 627 and 649 to 659; these read GLSL…RTLS and SSGSWSSPRHS. A compositionally biased stretch (polar residues) spans 720-740; it reads VTSSPTSHKANSATTGFSCQG.

The protein resides in the cytoplasm. It localises to the membrane. In terms of biological role, binds specifically to phosphatidylinositol 3-phosphate (PtdIns3P), but not to other phosphoinositides. The chain is Pleckstrin homology domain-containing family A member 4 (Plekha4) from Rattus norvegicus (Rat).